The chain runs to 313 residues: uncharacterized protein (313 aa).

Positions 2-57 constitute an HTH deoR-type domain; it reads KLERLLAMVVLLISKKQVQAAELAELFEVSVRTIYRDIETINRAGIPIVTSQGSGG. A DNA-binding region (H-T-H motif) is located at residues 19-38; it reads VQAAELAELFEVSVRTIYRD. The region spanning 131-210 is the WYL domain; that stretch reads HTEDQKTLRE…KDLAILHQTF (80 aa).

The protein localises to the cytoplasm. This is an uncharacterized protein from Bacillus subtilis (strain 168).